Here is a 245-residue protein sequence, read N- to C-terminus: Octopine transport system permease protein OccM (245 aa).

Helical transmembrane passes span 12-32, 57-77, 96-116, 163-183, and 199-219; these read FIALLAGIPLALKLAVFSIAV, FYIFAFRGTPLLVQIYIIYYG, AYWCALGALALNTAAYSAEIM, VLMVKSTSLASTITLMEITGI, and ACAGAIYLTMNFIAARLFALI. Residues 19-216 form the ABC transmembrane type-1 domain; sequence IPLALKLAVF…TMNFIAARLF (198 aa).

The protein belongs to the binding-protein-dependent transport system permease family. HisMQ subfamily.

The protein localises to the cell inner membrane. Component of the octopine active transport system probably consisting of four subunits: Q, M, P and T. This is Octopine transport system permease protein OccM (occM) from Rhizobium meliloti (Ensifer meliloti).